Consider the following 480-residue polypeptide: Ribosomal protein uS12 methylthiotransferase RimO (480 aa).

The 111-residue stretch at 37-147 (NRIGFVSLGC…VLKHVHKYVP (111 aa)) folds into the MTTase N-terminal domain. The [4Fe-4S] cluster site is built by cysteine 46, cysteine 82, cysteine 111, cysteine 179, cysteine 183, and cysteine 186. The Radical SAM core domain maps to 165 to 402 (LTPKHYAYLK…MEVQAEISAE (238 aa)). One can recognise a TRAM domain in the interval 405 to 471 (ARFVGRTMDI…EHDLWAELVD (67 aa)).

The protein belongs to the methylthiotransferase family. RimO subfamily. Requires [4Fe-4S] cluster as cofactor.

It localises to the cytoplasm. The catalysed reaction is L-aspartate(89)-[ribosomal protein uS12]-hydrogen + (sulfur carrier)-SH + AH2 + 2 S-adenosyl-L-methionine = 3-methylsulfanyl-L-aspartate(89)-[ribosomal protein uS12]-hydrogen + (sulfur carrier)-H + 5'-deoxyadenosine + L-methionine + A + S-adenosyl-L-homocysteine + 2 H(+). Catalyzes the methylthiolation of an aspartic acid residue of ribosomal protein uS12. The chain is Ribosomal protein uS12 methylthiotransferase RimO from Shewanella sp. (strain ANA-3).